Consider the following 334-residue polypeptide: N-acetyl-gamma-glutamyl-phosphate reductase (334 aa).

Residue Cys-154 is part of the active site.

Belongs to the NAGSA dehydrogenase family. Type 1 subfamily.

The protein localises to the cytoplasm. It catalyses the reaction N-acetyl-L-glutamate 5-semialdehyde + phosphate + NADP(+) = N-acetyl-L-glutamyl 5-phosphate + NADPH + H(+). It participates in amino-acid biosynthesis; L-arginine biosynthesis; N(2)-acetyl-L-ornithine from L-glutamate: step 3/4. Functionally, catalyzes the NADPH-dependent reduction of N-acetyl-5-glutamyl phosphate to yield N-acetyl-L-glutamate 5-semialdehyde. This Photorhabdus laumondii subsp. laumondii (strain DSM 15139 / CIP 105565 / TT01) (Photorhabdus luminescens subsp. laumondii) protein is N-acetyl-gamma-glutamyl-phosphate reductase.